We begin with the raw amino-acid sequence, 173 residues long: RNA polymerase sigma factor TcsR (173 aa).

The sigma-70 factor domain-4 stretch occupies residues 122–169; the sequence is IKDLTQNEKNIIRKIYLDRLRESEISRELNISRQAVNKTHLRALEKLK. The H-T-H motif DNA-binding region spans 143-162; the sequence is ESEISRELNISRQAVNKTHL.

It belongs to the sigma-70 factor family.

In terms of biological role, sigma factors are initiation factors that promote the attachment of RNA polymerase to specific initiation sites and are then released. Transcriptional regulator specifically required to activate expression of the toxin gene locus, composed of tcsL, tcsH and tcdE/utxA. This Paraclostridium sordellii (Clostridium sordellii) protein is RNA polymerase sigma factor TcsR.